Reading from the N-terminus, the 130-residue chain is Transcription antitermination protein NusB (130 aa).

It belongs to the NusB family.

Its function is as follows. Involved in transcription antitermination. Required for transcription of ribosomal RNA (rRNA) genes. Binds specifically to the boxA antiterminator sequence of the ribosomal RNA (rrn) operons. The protein is Transcription antitermination protein NusB of Sulfurovum sp. (strain NBC37-1).